Reading from the N-terminus, the 479-residue chain is ATP synthase subunit beta (479 aa).

Residue 168 to 175 participates in ATP binding; sequence GGAGVGKT.

The protein belongs to the ATPase alpha/beta chains family. As to quaternary structure, F-type ATPases have 2 components, CF(1) - the catalytic core - and CF(0) - the membrane proton channel. CF(1) has five subunits: alpha(3), beta(3), gamma(1), delta(1), epsilon(1). CF(0) has three main subunits: a(1), b(2) and c(9-12). The alpha and beta chains form an alternating ring which encloses part of the gamma chain. CF(1) is attached to CF(0) by a central stalk formed by the gamma and epsilon chains, while a peripheral stalk is formed by the delta and b chains.

Its subcellular location is the cell membrane. The catalysed reaction is ATP + H2O + 4 H(+)(in) = ADP + phosphate + 5 H(+)(out). Produces ATP from ADP in the presence of a proton gradient across the membrane. The catalytic sites are hosted primarily by the beta subunits. The chain is ATP synthase subunit beta from Frankia alni (strain DSM 45986 / CECT 9034 / ACN14a).